The sequence spans 708 residues: MARDLQNHLLFEVATEVTNRVGGIYSVLKSKAPVTVAQYGDNYTLLGPLNKATYESEVEKLDWEDESIFPEELLPIQKTLMSMREKGVNFVYGNWLIEGAPRVILFELDSVRHFLNEWKADLWSLVGIPSPEHDHETNDAILLGYVVVWFLGEVSKLDSSHAIIGHFHEWLAGVALPLCRKKRIDVVTIFTTHATLLGRYLCAAGDVDFYNNLQYFDVDQEAGKRGIYHRYCIERAAAHTADVFTTVSQITALEAEHLLKRKPDGILPNGLNVVKFQAVHEFQNLHALKKDKINDFVRGHFHGCFDFDLDNTVYFFIAGRYEYKNKGADMFIESLARLNYRLKVSGSKKTVVAFLIMPAKTNSFTVEALKSQAIVKSLENTVNEVTASIGKRIFEHTMRYPHNGLESELPTNLDELLKSSEKVLLKKRVLALRRPYGELPPVVTHNMCDDANDPILNQIRHVRLFNDSSDRVKVIFHPEFLNANNPILGLDYDEFVRGCHLGVFPSYYEPWGYTPAECTVMGVPSITTNVSGFGAYMEDLIETDQAKDYGIYIVDRRFKSPDESVEQLADYMEEFVNKTRRQRINQRNRTERLSDLLDWKRMGLEYVKARQLGLRRAYPEQFKQLVGETISDANMNTLAGGKKFKIARPLSVPGSPKVRSNSTVYMTPGDLGTLQDANNADDYFNLSTNGAIDNDDDDNDTSAYYEDN.

Arg20 serves as a coordination point for UDP. Ser159 is subject to Phosphoserine. UDP-alpha-D-glucose-binding residues include His193 and Arg199. 5 residues coordinate alpha-D-glucose 6-phosphate: His280, Glu281, Gln283, His286, and Lys290. UDP is bound at residue Arg320. Arg320 contributes to the UDP-alpha-D-glucose binding site. Ser363 carries the phosphoserine modification. His500 is an alpha-D-glucose 6-phosphate binding site. Positions 509, 511, and 512 each coordinate UDP-alpha-D-glucose. Thr514 is a binding site for UDP. Residue Ser560 is modified to Phosphoserine. Alpha-D-glucose 6-phosphate-binding residues include Arg583 and Arg587. Ser651 and Ser655 each carry phosphoserine. Ser660 and Ser662 each carry phosphoserine; by PKA. The segment at 687-708 (STNGAIDNDDDDNDTSAYYEDN) is disordered. Residues 693-708 (DNDDDDNDTSAYYEDN) show a composition bias toward acidic residues.

Belongs to the glycosyltransferase 3 family.

It carries out the reaction [(1-&gt;4)-alpha-D-glucosyl](n) + UDP-alpha-D-glucose = [(1-&gt;4)-alpha-D-glucosyl](n+1) + UDP + H(+). It participates in glycan biosynthesis; glycogen biosynthesis. Its activity is regulated as follows. Allosteric activation by glucose-6-phosphate, and phosphorylation by a cAMP-dependent kinase. Functionally, glycogen synthase participates in the glycogen biosynthetic process along with glycogenin and glycogen branching enzyme. Extends the primer composed of a few glucose units formed by glycogenin by adding new glucose units to it. In this context, glycogen synthase transfers the glycosyl residue from UDP-Glc to the non-reducing end of alpha-1,4-glucan. This Saccharomyces cerevisiae (strain ATCC 204508 / S288c) (Baker's yeast) protein is Glycogen [starch] synthase isoform 1 (GSY1).